Consider the following 347-residue polypeptide: Mitochondrial glycine transporter (347 aa).

Solcar repeat units follow at residues 18–102 (SKPT…LRTA), 138–222 (LSHT…SKRS), and 247–331 (STAS…LIMW). The next 6 membrane-spanning stretches (helical) occupy residues 24-49 (FAAG…TRVQ), 77-103 (GTLP…RTAV), 144-169 (LITG…VRYE), 197-220 (GFGA…EQSK), 251-277 (INFI…KTRV), and 306-324 (GLGL…AWTV).

The protein belongs to the mitochondrial carrier (TC 2.A.29) family. SLC25A38 subfamily.

The protein localises to the mitochondrion inner membrane. The enzyme catalyses glycine(in) = glycine(out). Functionally, mitochondrial glycine transporter that imports glycine into the mitochondrial matrix. Plays an important role in providing glycine for the first enzymatic step in heme biosynthesis, the condensation of glycine with succinyl-CoA to produce 5-aminolevulinate (ALA) in the mitochondrial matrix. The sequence is that of Mitochondrial glycine transporter from Coccidioides immitis (strain RS) (Valley fever fungus).